Consider the following 306-residue polypeptide: Serine/threonine-protein phosphatase PP-X homolog 4 (306 aa).

Positions 53, 55, 81, and 113 each coordinate Mn(2+). Residue histidine 114 is the Proton donor of the active site. Mn(2+) contacts are provided by histidine 163 and histidine 237.

The protein belongs to the PPP phosphatase family. PP-4 (PP-X) subfamily. The cofactor is Mn(2+).

The catalysed reaction is O-phospho-L-seryl-[protein] + H2O = L-seryl-[protein] + phosphate. It catalyses the reaction O-phospho-L-threonyl-[protein] + H2O = L-threonyl-[protein] + phosphate. This Paramecium tetraurelia protein is Serine/threonine-protein phosphatase PP-X homolog 4 (Ppx4).